A 490-amino-acid chain; its full sequence is Betaine aldehyde dehydrogenase (490 aa).

Residues isoleucine 27 and aspartate 93 each contribute to the K(+) site. Residue 150-152 (GAW) coordinates NAD(+). The active-site Charge relay system is the lysine 162. 176–179 (KPSE) contacts NAD(+). Valine 180 contacts K(+). 230-233 (GTTT) provides a ligand contact to NAD(+). Leucine 246 is a binding site for K(+). Residue glutamate 252 is the Proton acceptor of the active site. NAD(+) contacts are provided by glycine 254, cysteine 286, and glutamate 387. The active-site Nucleophile is the cysteine 286. Cysteine 286 bears the Cysteine sulfenic acid (-SOH) mark. K(+)-binding residues include lysine 457 and glycine 460. The active-site Charge relay system is glutamate 464.

Belongs to the aldehyde dehydrogenase family. As to quaternary structure, dimer of dimers. Requires K(+) as cofactor.

The catalysed reaction is betaine aldehyde + NAD(+) + H2O = glycine betaine + NADH + 2 H(+). Its pathway is amine and polyamine biosynthesis; betaine biosynthesis via choline pathway; betaine from betaine aldehyde: step 1/1. In terms of biological role, involved in the biosynthesis of the osmoprotectant glycine betaine. Catalyzes the irreversible oxidation of betaine aldehyde to the corresponding acid. The polypeptide is Betaine aldehyde dehydrogenase (Pseudomonas entomophila (strain L48)).